We begin with the raw amino-acid sequence, 417 residues long: Zinc-finger homeodomain protein 4 (417 aa).

Residues 1 to 12 (MVSILQLQTRTE) are compositionally biased toward polar residues. 2 disordered regions span residues 1–22 (MVSI…ASAA) and 31–50 (RQQQ…FQER). Residues 13 to 22 (ASPASSASAA) are compositionally biased toward low complexity. Residues 36–46 (QEGEEEEEEFE) are compositionally biased toward acidic residues. Residues 145-194 (YRECLKNHAAAIGGNATDGCGEFMPSGEEGSLEALKCSACGCHRNFHRKE) form a ZF-HD dimerization-type; degenerate zinc finger. 2 disordered regions span residues 281–309 (DEMD…FRTK) and 361–417 (NLAK…LKLE). Positions 286–298 (SGGGGGVGRGGGS) are enriched in gly residues. Residues 303 to 366 (KKRFRTKFTA…NNKHNLAKKP (64 aa)) constitute a DNA-binding region (homeobox). Over residues 368–417 (PSSPPPPPQIPPMSMPPSPPPPQIPPMSMPPSPPPMPMPMPPSPPQLKLE) the composition is skewed to pro residues.

Homo- and heterodimer with other ZFHD proteins.

The protein resides in the nucleus. Putative transcription factor. In Oryza sativa subsp. japonica (Rice), this protein is Zinc-finger homeodomain protein 4 (ZHD4).